The chain runs to 683 residues: DNA-directed RNA polymerase subunit beta' (683 aa).

4 residues coordinate Zn(2+): C69, C71, C87, and C90. Mg(2+) contacts are provided by D489, D491, and D493.

Belongs to the RNA polymerase beta' chain family. RpoC1 subfamily. In plastids the minimal PEP RNA polymerase catalytic core is composed of four subunits: alpha, beta, beta', and beta''. When a (nuclear-encoded) sigma factor is associated with the core the holoenzyme is formed, which can initiate transcription. It depends on Mg(2+) as a cofactor. Requires Zn(2+) as cofactor.

The protein localises to the plastid. Its subcellular location is the chloroplast. The enzyme catalyses RNA(n) + a ribonucleoside 5'-triphosphate = RNA(n+1) + diphosphate. In terms of biological role, DNA-dependent RNA polymerase catalyzes the transcription of DNA into RNA using the four ribonucleoside triphosphates as substrates. The chain is DNA-directed RNA polymerase subunit beta' from Sorghum bicolor (Sorghum).